A 381-amino-acid chain; its full sequence is GDP-mannose transporter (381 aa).

Positions 1-12 (MSDDKKSDDYRV) are enriched in basic and acidic residues. The disordered stretch occupies residues 1 to 28 (MSDDKKSDDYRVDMPSSRTSRAPSPIMR). Residues 1–36 (MSDDKKSDDYRVDMPSSRTSRAPSPIMRPALKSAPS) lie on the Cytoplasmic side of the membrane. The helical transmembrane segment at 37–57 (LTENPMAAVLAYCASSILMTV) threads the bilayer. The Lumenal segment spans residues 58–67 (TNKYVLSGVD). A helical transmembrane segment spans residues 68–88 (FNLNFFLLCVQSVVCVTAISI). The Cytoplasmic portion of the chain corresponds to 89-107 (CKAAGLITYRDFNTDEAKK). The helical transmembrane segment at 108-126 (WFPISLLLIGMIYTGTWAL) threads the bilayer. The Lumenal portion of the chain corresponds to 127 to 130 (KYLS). The chain crosses the membrane as a helical span at residues 131-153 (IPVYTIFKNLTIILIAYGEVLWF). The Cytoplasmic segment spans residues 154-161 (GGSVTPMT). A helical transmembrane segment spans residues 162–184 (LFSFGLMVLSSIIAAWADIQHAL). The Lumenal segment spans residues 185–199 (NSFGQQSEAANEALS). The helical transmembrane segment at 200 to 220 (TMHAGYLWMAFNCVCSATYLL) threads the bilayer. Over 221 to 242 (SMRKRIKLTNFKDYDTMYYNNL) the chain is Cytoplasmic. Residues 243 to 263 (LTIPILLVASILVEDWSSANI) form a helical membrane-spanning segment. The Lumenal portion of the chain corresponds to 264 to 274 (QKNFPPEQRNT). Residues 275–295 (VIMVMVISGMSTVFISYTSAW) traverse the membrane as a helical segment. The Cytoplasmic segment spans residues 296–303 (AVRVTSST). Residues 304-324 (TYSMVGALNKLPIAISGLVFF) traverse the membrane as a helical segment. Topologically, residues 325–327 (DAP) are lumenal. Residues 328–348 (VTFGSVSAIFVGFVSGIVYAV) form a helical membrane-spanning segment. At 349-381 (AKVRQNSKPKTVLPTTNIPLSASSRSMQDSLKA) the chain is on the cytoplasmic side.

The protein belongs to the TPT transporter family. SLC35D subfamily. As to quaternary structure, homooligomer.

It localises to the golgi apparatus membrane. The protein localises to the cytoplasmic vesicle membrane. Its subcellular location is the endoplasmic reticulum membrane. Its function is as follows. Involved in the import of GDP-mannose from the cytoplasm into the Golgi lumen. This chain is GDP-mannose transporter (VRG4), found in Phaeosphaeria nodorum (strain SN15 / ATCC MYA-4574 / FGSC 10173) (Glume blotch fungus).